The primary structure comprises 283 residues: Elongation factor Ts (283 aa).

Residues 80 to 83 (TDFV) form an involved in Mg(2+) ion dislocation from EF-Tu region.

This sequence belongs to the EF-Ts family.

The protein localises to the cytoplasm. Functionally, associates with the EF-Tu.GDP complex and induces the exchange of GDP to GTP. It remains bound to the aminoacyl-tRNA.EF-Tu.GTP complex up to the GTP hydrolysis stage on the ribosome. In Serratia proteamaculans (strain 568), this protein is Elongation factor Ts.